A 215-amino-acid chain; its full sequence is Thymidylate kinase (215 aa).

13–20 (GLEGAGKS) serves as a coordination point for ATP.

The protein belongs to the thymidylate kinase family.

It catalyses the reaction dTMP + ATP = dTDP + ADP. In terms of biological role, phosphorylation of dTMP to form dTDP in both de novo and salvage pathways of dTTP synthesis. The polypeptide is Thymidylate kinase (Shewanella frigidimarina (strain NCIMB 400)).